The chain runs to 467 residues: MTKIASVANILKGKITVGETVTVRGWIRTRRDSKAGLSFLAIYDGSCFDPIQAIVNNDIENYETEILRLTTGCSVVVTGKIVESPAEGQAVELQADKIEVSGWVDDPETYPMSAKRHSIEYLREVAHLRPRTNIIGAVARVRHCLAQAIHRFFHEQGFYWVATPLITASDTEGAGEMFRVSTLDLENLPRTDKGAVDFSQDFFGKESFLTVSGQLNGESYACALSKIYTFGPTFRAENSNTTRHLAEFWMVEPEIAFATLADNAKLAEDMLKYVFRAVLNEREDDLKFFEKHVDKNVITRLKDFINSDFAQIDYTDAIDILLKSGKAFEFPVSWGIDLSSEHERYLAEEYFKSPVVVKNYPKDIKAFYMRLNDDGKTVAAMDVLAPGIGEIIGGSQREERLEVLDKRIAEMGLKAEDYWWYRDLRRYGTVPHAGFGLGFERLIVYVTGVQNIRDVIPFPRTPRNANF.

It belongs to the class-II aminoacyl-tRNA synthetase family. In terms of assembly, homodimer.

The protein localises to the cytoplasm. The catalysed reaction is tRNA(Asn) + L-asparagine + ATP = L-asparaginyl-tRNA(Asn) + AMP + diphosphate + H(+). The chain is Asparagine--tRNA ligase from Histophilus somni (strain 2336) (Haemophilus somnus).